Here is a 97-residue protein sequence, read N- to C-terminus: Putative membrane protein insertion efficiency factor (97 aa).

The interval 77 to 97 is disordered; it reads VPDAPASPSPSSSCSCKGPHP. The segment covering 85-97 has biased composition (low complexity); it reads SPSSSCSCKGPHP.

Belongs to the UPF0161 family.

The protein localises to the cell inner membrane. Could be involved in insertion of integral membrane proteins into the membrane. The chain is Putative membrane protein insertion efficiency factor from Xanthomonas euvesicatoria pv. vesicatoria (strain 85-10) (Xanthomonas campestris pv. vesicatoria).